A 431-amino-acid polypeptide reads, in one-letter code: Gamma-glutamyl phosphate reductase (431 aa).

The protein belongs to the gamma-glutamyl phosphate reductase family.

It is found in the cytoplasm. It carries out the reaction L-glutamate 5-semialdehyde + phosphate + NADP(+) = L-glutamyl 5-phosphate + NADPH + H(+). Its pathway is amino-acid biosynthesis; L-proline biosynthesis; L-glutamate 5-semialdehyde from L-glutamate: step 2/2. Its function is as follows. Catalyzes the NADPH-dependent reduction of L-glutamate 5-phosphate into L-glutamate 5-semialdehyde and phosphate. The product spontaneously undergoes cyclization to form 1-pyrroline-5-carboxylate. This chain is Gamma-glutamyl phosphate reductase, found in Methylobacterium nodulans (strain LMG 21967 / CNCM I-2342 / ORS 2060).